We begin with the raw amino-acid sequence, 303 residues long: Glycine--tRNA ligase alpha subunit (303 aa).

The protein belongs to the class-II aminoacyl-tRNA synthetase family. Tetramer of two alpha and two beta subunits.

It localises to the cytoplasm. It catalyses the reaction tRNA(Gly) + glycine + ATP = glycyl-tRNA(Gly) + AMP + diphosphate. The sequence is that of Glycine--tRNA ligase alpha subunit from Erwinia tasmaniensis (strain DSM 17950 / CFBP 7177 / CIP 109463 / NCPPB 4357 / Et1/99).